The sequence spans 166 residues: Disulfide bond formation protein B (166 aa).

Over 1 to 10 the chain is Cytoplasmic; sequence MGLNITNRQG. The helical transmembrane segment at 11 to 27 threads the bilayer; it reads FLLVAAACAGAIGFALF. Over 28–45 the chain is Periplasmic; that stretch reads AQYQLGEEPCPLCILQRI. Residues Cys37 and Cys40 are joined by a disulfide bond. A helical membrane pass occupies residues 46 to 62; it reads GVMAVGALALLAALHNP. At 63-69 the chain is on the cytoplasmic side; that stretch reads GKTGAKV. A helical membrane pass occupies residues 70-86; that stretch reads WGGLMTLAALSGAGVSL. At 87–143 the chain is on the periplasmic side; sequence RQLWLQSLPADQVPQCGPGLEFLMESFPLWEVLSKVLKGSGECAAIQGRFLGMTMPF. A disulfide bond links Cys102 and Cys129. The helical transmembrane segment at 144–162 threads the bilayer; it reads WVAVFFAGVIVWTLWLVGR. At 163–166 the chain is on the cytoplasmic side; it reads RRRG.

The protein belongs to the DsbB family.

It localises to the cell inner membrane. Required for disulfide bond formation in some periplasmic proteins. Acts by oxidizing the DsbA protein. This Chromobacterium violaceum (strain ATCC 12472 / DSM 30191 / JCM 1249 / CCUG 213 / NBRC 12614 / NCIMB 9131 / NCTC 9757 / MK) protein is Disulfide bond formation protein B.